The sequence spans 338 residues: 3-phosphoshikimate 1-carboxyvinyltransferase 2 (338 aa).

Arginine 25 contacts phosphoenolpyruvate. Positions 72, 73, 74, 100, 225, and 252 each coordinate 3-phosphoshikimate. Glutamine 74 lines the phosphoenolpyruvate pocket. The Proton acceptor role is filled by aspartate 225. Phosphoenolpyruvate contacts are provided by arginine 256, arginine 298, and lysine 323.

The protein belongs to the EPSP synthase family.

The protein resides in the plastid. It localises to the chloroplast. The catalysed reaction is 3-phosphoshikimate + phosphoenolpyruvate = 5-O-(1-carboxyvinyl)-3-phosphoshikimate + phosphate. It participates in metabolic intermediate biosynthesis; chorismate biosynthesis; chorismate from D-erythrose 4-phosphate and phosphoenolpyruvate: step 6/7. Catalyzes the transfer of the enolpyruvyl moiety of phosphoenolpyruvate (PEP) to the 5-hydroxyl of shikimate-3-phosphate (S3P) to produce enolpyruvyl shikimate-3-phosphate and inorganic phosphate. This chain is 3-phosphoshikimate 1-carboxyvinyltransferase 2 (EPSPS-2), found in Nicotiana tabacum (Common tobacco).